Here is a 185-residue protein sequence, read N- to C-terminus: ATP synthase subunit b, chloroplastic (185 aa).

A helical membrane pass occupies residues 7-29; the sequence is SFVYLVGHCPFAGSFAFNTDILA.

Belongs to the ATPase B chain family. F-type ATPases have 2 components, F(1) - the catalytic core - and F(0) - the membrane proton channel. F(1) has five subunits: alpha(3), beta(3), gamma(1), delta(1), epsilon(1). F(0) has four main subunits: a(1), b(1), b'(1) and c(10-14). The alpha and beta chains form an alternating ring which encloses part of the gamma chain. F(1) is attached to F(0) by a central stalk formed by the gamma and epsilon chains, while a peripheral stalk is formed by the delta, b and b' chains.

It is found in the plastid. The protein resides in the chloroplast thylakoid membrane. Its function is as follows. F(1)F(0) ATP synthase produces ATP from ADP in the presence of a proton or sodium gradient. F-type ATPases consist of two structural domains, F(1) containing the extramembraneous catalytic core and F(0) containing the membrane proton channel, linked together by a central stalk and a peripheral stalk. During catalysis, ATP synthesis in the catalytic domain of F(1) is coupled via a rotary mechanism of the central stalk subunits to proton translocation. In terms of biological role, component of the F(0) channel, it forms part of the peripheral stalk, linking F(1) to F(0). The protein is ATP synthase subunit b, chloroplastic of Dioscorea elephantipes (Elephant's foot yam).